The chain runs to 186 residues: Ribosome-recycling factor (186 aa).

The protein belongs to the RRF family.

Its subcellular location is the cytoplasm. Its function is as follows. Responsible for the release of ribosomes from messenger RNA at the termination of protein biosynthesis. May increase the efficiency of translation by recycling ribosomes from one round of translation to another. This Chlorobium luteolum (strain DSM 273 / BCRC 81028 / 2530) (Pelodictyon luteolum) protein is Ribosome-recycling factor.